The chain runs to 563 residues: Heat shock 70 kDa protein 8 (563 aa).

The interval 1 to 25 (MAEAAYTVASDSENTGEEKSSSSPS) is disordered. Residue Ala-2 is modified to N-acetylalanine.

This sequence belongs to the heat shock protein 70 (TC 1.A.33) family. DnaK subfamily.

Functionally, in cooperation with other chaperones, Hsp70s are key components that facilitate folding of de novo synthesized proteins, assist translocation of precursor proteins into organelles, and are responsible for degradation of damaged protein under stress conditions. The protein is Heat shock 70 kDa protein 8 (HSP70-8) of Arabidopsis thaliana (Mouse-ear cress).